A 172-amino-acid chain; its full sequence is Gamma-crystallin-4 (172 aa).

Beta/gamma crystallin 'Greek key' domains are found at residues 1-37 and 38-80; these read IFFYEERNFQGRCYECSSECSDLSSYFNRCNSIRVES and GNWI…RFIP. Residues 81–85 are connecting peptide; it reads HPHSQ. Beta/gamma crystallin 'Greek key' domains are found at residues 86–126 and 127–169; these read YKMR…NVSD and GHWM…RRVH.

It belongs to the beta/gamma-crystallin family. Monomer.

Its function is as follows. Crystallins are the dominant structural components of the vertebrate eye lens. The sequence is that of Gamma-crystallin-4 (cryg4) from Xenopus laevis (African clawed frog).